The primary structure comprises 367 residues: 2-oxoisovalerate dehydrogenase subunit alpha (367 aa).

Substrate is bound by residues phenylalanine 66, tyrosine 95, 128–131, and serine 144; that span reads MPEH. 94 to 96 serves as a coordination point for thiamine diphosphate; the sequence is YYR. Thiamine diphosphate contacts are provided by residues 144 to 146, 174 to 180, 204 to 208, and histidine 273; these read SPI, GDGATSE, and NFYAI. Mg(2+) is bound by residues aspartate 175, asparagine 204, and tyrosine 206.

It belongs to the BCKDHA family. Heterotetramer of two alpha and two beta chains. Directly associated with ODBB in the E1 complex. The cofactor is thiamine diphosphate.

It catalyses the reaction N(6)-[(R)-lipoyl]-L-lysyl-[protein] + 3-methyl-2-oxobutanoate + H(+) = N(6)-[(R)-S(8)-2-methylpropanoyldihydrolipoyl]-L-lysyl-[protein] + CO2. The branched-chain alpha-keto dehydrogenase complex catalyzes the overall conversion of alpha-keto acids to acyl-CoA and CO(2). It contains multiple copies of three enzymatic components: branched-chain alpha-keto acid decarboxylase (E1), lipoamide acyltransferase (E2) and lipoamide dehydrogenase (E3). In Thermus thermophilus (strain ATCC 27634 / DSM 579 / HB8), this protein is 2-oxoisovalerate dehydrogenase subunit alpha.